The sequence spans 213 residues: Pyrrolidone-carboxylate peptidase (213 aa).

Active-site residues include Glu78, Cys141, and His165.

It belongs to the peptidase C15 family. As to quaternary structure, homotetramer.

It is found in the cytoplasm. It catalyses the reaction Release of an N-terminal pyroglutamyl group from a polypeptide, the second amino acid generally not being Pro.. Functionally, removes 5-oxoproline from various penultimate amino acid residues except L-proline. This is Pyrrolidone-carboxylate peptidase from Finegoldia magna (strain ATCC 29328 / DSM 20472 / WAL 2508) (Peptostreptococcus magnus).